Here is a 149-residue protein sequence, read N- to C-terminus: Ribonuclease H (149 aa).

In terms of domain architecture, RNase H type-1 spans 1 to 142 (MSTITIHTDG…ADELAREGLA (142 aa)). D9, E47, D70, and D134 together coordinate Mg(2+). A disordered region spans residues 124 to 149 (HAGDPGNERADELAREGLAEARGRQP). Basic and acidic residues predominate over residues 129–149 (GNERADELAREGLAEARGRQP).

This sequence belongs to the RNase H family. As to quaternary structure, monomer. It depends on Mg(2+) as a cofactor.

The protein resides in the cytoplasm. The catalysed reaction is Endonucleolytic cleavage to 5'-phosphomonoester.. In terms of biological role, endonuclease that specifically degrades the RNA of RNA-DNA hybrids. The chain is Ribonuclease H from Maricaulis maris (strain MCS10) (Caulobacter maris).